We begin with the raw amino-acid sequence, 160 residues long: Phosphopantetheine adenylyltransferase (160 aa).

A substrate-binding site is contributed by Ser9. ATP contacts are provided by residues 9–10 (SF) and His17. Substrate contacts are provided by Lys41, Leu73, and Lys87. ATP-binding positions include 88–90 (GLR), Glu98, and 123–129 (YSYLSSS).

This sequence belongs to the bacterial CoaD family. As to quaternary structure, homohexamer. Requires Mg(2+) as cofactor.

The protein resides in the cytoplasm. It carries out the reaction (R)-4'-phosphopantetheine + ATP + H(+) = 3'-dephospho-CoA + diphosphate. It functions in the pathway cofactor biosynthesis; coenzyme A biosynthesis; CoA from (R)-pantothenate: step 4/5. Reversibly transfers an adenylyl group from ATP to 4'-phosphopantetheine, yielding dephospho-CoA (dPCoA) and pyrophosphate. The chain is Phosphopantetheine adenylyltransferase from Clostridium tetani (strain Massachusetts / E88).